The primary structure comprises 495 residues: UDP-N-acetylmuramoyl-L-alanyl-D-glutamate--2,6-diaminopimelate ligase (495 aa).

Residues Leu27, Ser29, and 44–46 (HQA) each bind UDP-N-acetyl-alpha-D-muramoyl-L-alanyl-D-glutamate. 116–122 (GTNGKTT) lines the ATP pocket. UDP-N-acetyl-alpha-D-muramoyl-L-alanyl-D-glutamate-binding positions include Asn157, 158–159 (TT), Ser185, Gln191, and Arg193. Position 225 is an N6-carboxylysine (Lys225). Residues Arg390, 414-417 (DNPR), Gly465, and Glu469 contribute to the meso-2,6-diaminopimelate site. Positions 414–417 (DNPR) match the Meso-diaminopimelate recognition motif motif.

The protein belongs to the MurCDEF family. MurE subfamily. The cofactor is Mg(2+). Post-translationally, carboxylation is probably crucial for Mg(2+) binding and, consequently, for the gamma-phosphate positioning of ATP.

Its subcellular location is the cytoplasm. It catalyses the reaction UDP-N-acetyl-alpha-D-muramoyl-L-alanyl-D-glutamate + meso-2,6-diaminopimelate + ATP = UDP-N-acetyl-alpha-D-muramoyl-L-alanyl-gamma-D-glutamyl-meso-2,6-diaminopimelate + ADP + phosphate + H(+). The protein operates within cell wall biogenesis; peptidoglycan biosynthesis. In terms of biological role, catalyzes the addition of meso-diaminopimelic acid to the nucleotide precursor UDP-N-acetylmuramoyl-L-alanyl-D-glutamate (UMAG) in the biosynthesis of bacterial cell-wall peptidoglycan. This is UDP-N-acetylmuramoyl-L-alanyl-D-glutamate--2,6-diaminopimelate ligase from Salmonella typhimurium (strain LT2 / SGSC1412 / ATCC 700720).